The following is a 234-amino-acid chain: ATP-dependent dethiobiotin synthetase BioD (234 aa).

12-17 (DVGKTF) contacts ATP. Residue T16 coordinates Mg(2+). The active site involves K37. Residue T41 participates in substrate binding. Residues D54 and 115 to 118 (EGAG) contribute to the ATP site. Residues D54 and E115 each contribute to the Mg(2+) site.

The protein belongs to the dethiobiotin synthetase family. As to quaternary structure, homodimer. Requires Mg(2+) as cofactor.

The protein localises to the cytoplasm. It catalyses the reaction (7R,8S)-7,8-diammoniononanoate + CO2 + ATP = (4R,5S)-dethiobiotin + ADP + phosphate + 3 H(+). Its pathway is cofactor biosynthesis; biotin biosynthesis; biotin from 7,8-diaminononanoate: step 1/2. Catalyzes a mechanistically unusual reaction, the ATP-dependent insertion of CO2 between the N7 and N8 nitrogen atoms of 7,8-diaminopelargonic acid (DAPA, also called 7,8-diammoniononanoate) to form a ureido ring. This is ATP-dependent dethiobiotin synthetase BioD from Lysinibacillus sphaericus (Bacillus sphaericus).